The chain runs to 405 residues: Phosphopentomutase (405 aa).

Asp-10, Asp-305, His-310, Asp-346, His-347, and His-358 together coordinate Mn(2+).

Belongs to the phosphopentomutase family. The cofactor is Mn(2+).

The protein resides in the cytoplasm. The catalysed reaction is 2-deoxy-alpha-D-ribose 1-phosphate = 2-deoxy-D-ribose 5-phosphate. It catalyses the reaction alpha-D-ribose 1-phosphate = D-ribose 5-phosphate. It participates in carbohydrate degradation; 2-deoxy-D-ribose 1-phosphate degradation; D-glyceraldehyde 3-phosphate and acetaldehyde from 2-deoxy-alpha-D-ribose 1-phosphate: step 1/2. Functionally, isomerase that catalyzes the conversion of deoxy-ribose 1-phosphate (dRib-1-P) and ribose 1-phosphate (Rib-1-P) to deoxy-ribose 5-phosphate (dRib-5-P) and ribose 5-phosphate (Rib-5-P), respectively. This chain is Phosphopentomutase, found in Methylorubrum extorquens (strain CM4 / NCIMB 13688) (Methylobacterium extorquens).